The following is a 695-amino-acid chain: MQRQNTQAAGMPMMPQVPMVGNGVPYVVPIQPVFAPLPPDYRSLYKKLYGQGAFLVDNPVEASSPYDFSQPILKFGKLPIKQVLRDNESQQKDRKNLPRNQKSNEIQEKQTFQTPSSEKSTTERESRPFVPPNSQQMRRMLFIGNIPKELDDFWMDKILRLSGKLASWRRVADADNSMTSFGFAEFESNEQFSRALEALNDFVVPPLYEGGPSTRLSLITDVENEGLYREWQTSRYARNKQKEINILQQIRFNLERICQDIGNFDVRSRIERAARQAREKNEKLLQNVKTSEIPINAADLEGINPELLPVIEEEIRSFRDQSAMKKREKQRSKDEYASLYKEYTRKEQEKLRKQNDDLQNLLSKHRISRIPMSTVNAFLRAEDSIPESFSDEQAYYEEKRRKDQLEAEEYYARERRWMNREKARTAALEREAAREEEERVNNTSFGTYLSEKLASFDDDEEARVSRDEYFVDRAAWIRHRAVARAREEDADALDRKEEERELRTRGEGATVETENYVENGKLVTSEMPQHENGPFKIKIQTKKPAVPSERREFGLPERLLLEEEDEEPQGYSPNPQKPKPAMEENDAEKTKRLRSLIEKIPVEAESLWALPIDWSKVTEDLLKEEMQAFVTKKIIEYIGIQEDSLITFTIDHIRQHKGAEQLVSELDLALAEDAPEFVSKVYRYLHVLLILRSEA.

The span at 85–96 (RDNESQQKDRKN) shows a compositional bias: basic and acidic residues. The interval 85-134 (RDNESQQKDRKNLPRNQKSNEIQEKQTFQTPSSEKSTTERESRPFVPPNS) is disordered. The segment covering 98–113 (PRNQKSNEIQEKQTFQ) has biased composition (polar residues). Positions 139 to 221 (RMLFIGNIPK…PSTRLSLITD (83 aa)) constitute an RRM domain. A coiled-coil region spans residues 265-369 (DVRSRIERAA…NLLSKHRISR (105 aa)). Composition is skewed to basic and acidic residues over residues 487–506 (EEDA…RTRG) and 548–561 (SERR…RLLL). Disordered stretches follow at residues 487–509 (EEDA…GEGA) and 540–590 (QTKK…AEKT). The PWI domain maps to 605 to 695 (ESLWALPIDW…HVLLILRSEA (91 aa)).

As to quaternary structure, component of the U1 snRNP particle, a subcomplex of the spliceosome. Interacts with prp5 and usp102.

The protein resides in the cytoplasm. It localises to the nucleus. Its function is as follows. Component of the U1 snRNP particle, which recognizes and binds the 5'-splice site of pre-mRNA. Together with other non-snRNP factors, U1 snRNP forms the spliceosomal commitment complex, that targets pre-mRNA to the splicing pathway. This Schizosaccharomyces pombe (strain 972 / ATCC 24843) (Fission yeast) protein is U1 snRNP-associated protein usp107 (usp107).